Here is a 167-residue protein sequence, read N- to C-terminus: MARYEDLPYRTCVGMMLINRAGLVFIGRRAGGIEHVDDTHVWQMPQGGVDPGEDTWEAAKRELYEETNVRSVEKIAEVPDWLIYDIPRTVAGRAWKGRYRGQRQKWFAIRFTGQDSEIDIIAPPGHKSEFTSWRWEPMLNLPDLIVPFKRPVYERVVKEFSQLAIAV.

The 151-residue stretch at 8–158 (PYRTCVGMML…KRPVYERVVK (151 aa)) folds into the Nudix hydrolase domain. Residues 47–68 (GGVDPGEDTWEAAKRELYEETN) carry the Nudix box motif.

The protein belongs to the Nudix hydrolase family. RppH subfamily. A divalent metal cation is required as a cofactor.

Accelerates the degradation of transcripts by removing pyrophosphate from the 5'-end of triphosphorylated RNA, leading to a more labile monophosphorylated state that can stimulate subsequent ribonuclease cleavage. In Rhodopseudomonas palustris (strain HaA2), this protein is RNA pyrophosphohydrolase.